Reading from the N-terminus, the 185-residue chain is Ribosome-recycling factor (185 aa).

It belongs to the RRF family.

It is found in the cytoplasm. Its function is as follows. Responsible for the release of ribosomes from messenger RNA at the termination of protein biosynthesis. May increase the efficiency of translation by recycling ribosomes from one round of translation to another. The chain is Ribosome-recycling factor from Bacillus anthracis (strain A0248).